A 158-amino-acid chain; its full sequence is AP-1 complex subunit sigma-1A (158 aa).

A Phosphoserine modification is found at S147.

This sequence belongs to the adaptor complexes small subunit family. In terms of assembly, adaptor protein complex 1 (AP-1) is a heterotetramer composed of two large adaptins (gamma-type subunit AP1G1 and beta-type subunit AP1B1), a medium adaptin (mu-type subunit AP1M1 or AP1M2) and a small adaptin (sigma-type subunit AP1S1 or AP1S2 or AP1S3). In terms of tissue distribution, widely expressed.

The protein localises to the golgi apparatus. It localises to the cytoplasmic vesicle membrane. It is found in the membrane. The protein resides in the clathrin-coated pit. Subunit of clathrin-associated adaptor protein complex 1 that plays a role in protein sorting in the late-Golgi/trans-Golgi network (TGN) and/or endosomes. The AP complexes mediate both the recruitment of clathrin to membranes and the recognition of sorting signals within the cytosolic tails of transmembrane cargo molecules. This chain is AP-1 complex subunit sigma-1A (AP1S1), found in Homo sapiens (Human).